The following is a 100-amino-acid chain: Urease subunit gamma (100 aa).

Belongs to the urease gamma subunit family. Heterotrimer of UreA (gamma), UreB (beta) and UreC (alpha) subunits. Three heterotrimers associate to form the active enzyme.

The protein resides in the cytoplasm. The enzyme catalyses urea + 2 H2O + H(+) = hydrogencarbonate + 2 NH4(+). It functions in the pathway nitrogen metabolism; urea degradation; CO(2) and NH(3) from urea (urease route): step 1/1. This is Urease subunit gamma from Pseudomonas aeruginosa (strain UCBPP-PA14).